Consider the following 294-residue polypeptide: NAD kinase (294 aa).

Aspartate 72 acts as the Proton acceptor in catalysis. NAD(+) is bound by residues 72–73 (DG), 146–147 (ND), arginine 157, arginine 174, aspartate 176, 187–192 (TAYSLS), and glutamine 247.

This sequence belongs to the NAD kinase family. A divalent metal cation is required as a cofactor.

It is found in the cytoplasm. It catalyses the reaction NAD(+) + ATP = ADP + NADP(+) + H(+). Functionally, involved in the regulation of the intracellular balance of NAD and NADP, and is a key enzyme in the biosynthesis of NADP. Catalyzes specifically the phosphorylation on 2'-hydroxyl of the adenosine moiety of NAD to yield NADP. This is NAD kinase from Marinobacter nauticus (strain ATCC 700491 / DSM 11845 / VT8) (Marinobacter aquaeolei).